We begin with the raw amino-acid sequence, 484 residues long: Trigger factor (484 aa).

Positions 165-244 (GDFVQIDLTA…VQSVKERELP (80 aa)) constitute a PPIase FKBP-type domain. A disordered region spans residues 429–484 (DAVSEEPADADAEAVVADAPAEEAAEAPAAEEAPAEKPKKKAPAKKKASEKAADSE). Positions 430–440 (AVSEEPADADA) are enriched in acidic residues. A compositionally biased stretch (basic and acidic residues) spans 475–484 (KASEKAADSE).

Belongs to the FKBP-type PPIase family. Tig subfamily.

It localises to the cytoplasm. The enzyme catalyses [protein]-peptidylproline (omega=180) = [protein]-peptidylproline (omega=0). Its function is as follows. Involved in protein export. Acts as a chaperone by maintaining the newly synthesized protein in an open conformation. Functions as a peptidyl-prolyl cis-trans isomerase. The chain is Trigger factor from Clavibacter michiganensis subsp. michiganensis (strain NCPPB 382).